A 24-amino-acid polypeptide reads, in one-letter code: Ranatuerin-4 (24 aa).

An intrachain disulfide couples Cys-18 to Cys-24.

Belongs to the frog skin active peptide (FSAP) family. Ranatuerin subfamily. In terms of tissue distribution, expressed by the skin glands.

Its subcellular location is the secreted. Functionally, antibacterial activity against Gram-positive bacterium S.aureus (MIC=55 uM). Shows no detectable hemolytic activity towards human erythrocytes. This Aquarana catesbeiana (American bullfrog) protein is Ranatuerin-4.